We begin with the raw amino-acid sequence, 130 residues long: Ribosome-binding factor A (130 aa).

The segment at 111 to 130 (RDLDDVGPEATSSDEDAEQR) is disordered.

The protein belongs to the RbfA family. As to quaternary structure, monomer. Binds 30S ribosomal subunits, but not 50S ribosomal subunits or 70S ribosomes.

Its subcellular location is the cytoplasm. Functionally, one of several proteins that assist in the late maturation steps of the functional core of the 30S ribosomal subunit. Associates with free 30S ribosomal subunits (but not with 30S subunits that are part of 70S ribosomes or polysomes). Required for efficient processing of 16S rRNA. May interact with the 5'-terminal helix region of 16S rRNA. The polypeptide is Ribosome-binding factor A (Xanthomonas euvesicatoria pv. vesicatoria (strain 85-10) (Xanthomonas campestris pv. vesicatoria)).